Consider the following 405-residue polypeptide: POC1 centriolar protein homolog A (405 aa).

7 WD repeats span residues 17 to 56 (GHRDAVTCVDFSLNTKHLASGSMDSTLMIWHMKPQSRAYR), 59 to 98 (GHKDAVTCVNFSPSGHLLASGSRDKTVRIWVPNVKGESTV), 101 to 140 (AHTATVRSVHFCSDGQSLVTASDDKTVKVWSTHRQRFLFS), 143 to 182 (QHINWVRCAKFSPDGRLIVSASDDKTVKLWDKTSRECIHS), 185 to 224 (EHGGFVTYVDFHPSGTCIAAAGMDNTVKVWDARTHRLLQH), 227 to 266 (LHSAAVNALSFHPSGNYLITASSDSTLKILDLMEGRLLYT), and 269 to 308 (GHQGPATTVAFSRTGEYFASGGSDEQVMVWKSNFDIVDYG). Residues 313-352 (RRPPPLTSSSGTLPKMDLPVPPGRDRSLESVQGEPQESIS) are disordered. Residues 341 to 352 (ESVQGEPQESIS) show a composition bias toward polar residues. The stretch at 367–395 (QLDILTQTVSILEQRLTLTEDRLKQCLEN) forms a coiled coil.

It belongs to the WD repeat POC1 family. As to quaternary structure, interacts with POC1B. In terms of tissue distribution, widely expressed in embryonic and adult tissues.

Its subcellular location is the cytoplasm. The protein resides in the cytoskeleton. The protein localises to the microtubule organizing center. It localises to the centrosome. It is found in the centriole. Its subcellular location is the cilium basal body. The protein resides in the spindle pole. In terms of biological role, plays an important role in centriole assembly and/or stability and ciliogenesis. Involved in early steps of centriole duplication, as well as in the later steps of centriole length control. Acts in concert with POC1B to ensure centriole integrity and proper mitotic spindle formation. This chain is POC1 centriolar protein homolog A (Poc1a), found in Mus musculus (Mouse).